The primary structure comprises 527 residues: Optineurin (527 aa).

2 disordered regions span residues 1–32 and 101–143; these read MSHQPLSCLTEKEDSPTESTGNGPPYLAHPNL and SHEN…KDQL. Residues 38–170 adopt a coiled-coil conformation; the sequence is EELLQQMKEL…VSELQLKLNS (133 aa). The interval 58 to 209 is interaction with Rab8; the sequence is MKLNNQAMKG…GPTRTVSTSR (152 aa). The LIR motif lies at 176-181; that stretch reads DSFVEI. Phosphoserine; by TBK1 is present on S177. Over residues 186–197 the composition is skewed to basic and acidic residues; that stretch reads GEAEGSVKEIKH. 2 disordered regions span residues 186–214 and 262–292; these read GEAEGSVKEIKHSPGPTRTVSTSRALSKY and SDFEKKASNRSEIETQTEGSTEKENDEEKGL. S198 is modified (phosphoserine). The span at 201–210 shows a compositional bias: polar residues; it reads PTRTVSTSRA. Residues 239–458 adopt a coiled-coil conformation; the sequence is CLREGNQKVE…LLKENDAFED (220 aa). Composition is skewed to basic and acidic residues over residues 262–274 and 281–292; these read SDFEKKASNRSEI and STEKENDEEKGL. The tract at residues 361 to 527 is interaction with HD; sequence TRKESEKVDR…LQIHVMDCII (167 aa). An interaction with MYO6 region spans residues 362-470; it reads RKESEKVDRA…RQSLMEMQSR (109 aa). The UBAN motif lies at 424–429; sequence DFHAER. The residue at position 476 (S476) is a Phosphoserine. The segment at 497–527 adopts a CCHC NOA-type zinc-finger fold; that stretch reads QRNIPIHSCPKCGEVLPDIDTLQIHVMDCII. Residues C505, C508, H521, and C525 each coordinate Zn(2+).

Self-associates. Interacts with HD. Interacts with GTF3A. Interacts with MYO6. Interacts (via UBAN) with ubiquitinated TFRC. Interacts with GTP-bound Rab8 (RAB8A and/or RAB8B). Interacts with TBC1D17. Interacts with TBK1. Interacts with TRAF3. Binds to linear ubiquitin chains. Interacts with LC3 family members MAP1LC3A, MAP1LC3B, GABARAP, GABARAPL1 and GABARAPL2; OPTN phosphorylation increases the association (at least with MAP1LC3B). Interacts with RAB12; the interaction may be indirect. Interacts with TBK1; this interaction leads to the Golgi localization of TBK1 and its subsequent activation. Interacts with palmitoyltransferase ZDHHC17/HIP14; the interaction does not lead to palmitoylation of OPTN. Interacts with CYLD. Interacts with TOM1; the interaction is indirect and is mediated by MYO6, which acts as a bridge between TOM1 and OPTN. Interacts with USP12; the interaction is independent of USP12 deubiquitinase activity and may be involved in regulation of autophagic flux. In terms of processing, phosphorylated by TBK1, leading to restrict bacterial proliferation in case of infection.

Its subcellular location is the cytoplasm. The protein localises to the perinuclear region. It is found in the golgi apparatus. It localises to the trans-Golgi network. The protein resides in the cytoplasmic vesicle. Its subcellular location is the autophagosome. The protein localises to the recycling endosome. Plays an important role in the maintenance of the Golgi complex, in membrane trafficking, in exocytosis, through its interaction with myosin VI and Rab8. Links myosin VI to the Golgi complex and plays an important role in Golgi ribbon formation. Negatively regulates the induction of IFNB in response to RNA virus infection. Plays a neuroprotective role in the eye and optic nerve. Probably part of the TNF-alpha signaling pathway that can shift the equilibrium toward induction of cell death. May act by regulating membrane trafficking and cellular morphogenesis via a complex that contains Rab8 and huntingtin (HD). Mediates the interaction of Rab8 with the probable GTPase-activating protein TBC1D17 during Rab8-mediated endocytic trafficking, such as that of transferrin receptor (TFRC/TfR); regulates Rab8 recruitment to tubules emanating from the endocytic recycling compartment. Autophagy receptor that interacts directly with both the cargo to become degraded and an autophagy modifier of the MAP1 LC3 family; targets ubiquitin-coated bacteria (xenophagy) and appears to function in the same pathway as SQSTM1 and CALCOCO2/NDP52. The polypeptide is Optineurin (OPTN) (Pongo abelii (Sumatran orangutan)).